The sequence spans 334 residues: Retinol dehydrogenase 14 (334 aa).

51–57 (GANSGLG) contributes to the NADP(+) binding site. Ser190 contacts substrate. Residue Tyr215 is the Proton acceptor of the active site.

The protein belongs to the short-chain dehydrogenases/reductases (SDR) family.

It catalyses the reaction all-trans-retinol + NADP(+) = all-trans-retinal + NADPH + H(+). The enzyme catalyses 11-cis-retinol + NADP(+) = 11-cis-retinal + NADPH + H(+). The catalysed reaction is 9-cis-retinol + NADP(+) = 9-cis-retinal + NADPH + H(+). In terms of biological role, retinol dehydrogenase with a clear preference for NADP. Displays high activity towards 9-cis, 11-cis and all-trans-retinol. Shows a very weak activity towards 13-cis-retinol. Has no activity towards steroids. This is Retinol dehydrogenase 14 (Rdh14) from Mus musculus (Mouse).